Consider the following 72-residue polypeptide: Large ribosomal subunit protein uL29 (72 aa).

This sequence belongs to the universal ribosomal protein uL29 family.

The sequence is that of Large ribosomal subunit protein uL29 from Caldicellulosiruptor saccharolyticus (strain ATCC 43494 / DSM 8903 / Tp8T 6331).